The sequence spans 88 residues: Large ribosomal subunit protein bL27 (88 aa).

The segment at 1–24 (MAHKKGTGSTRNGRDSNAKRLGVK) is disordered.

The protein belongs to the bacterial ribosomal protein bL27 family.

In Synechococcus sp. (strain CC9605), this protein is Large ribosomal subunit protein bL27.